Here is a 596-residue protein sequence, read N- to C-terminus: Proteasome-associated ATPase (596 aa).

Residues 12-94 (SRWERETQDL…KEEIDRLAQP (83 aa)) adopt a coiled-coil conformation. 280-285 (GCGKTL) lines the ATP pocket. The interval 595-596 (YL) is docks into pockets in the proteasome alpha-ring.

Belongs to the AAA ATPase family. As to quaternary structure, homohexamer. Assembles into a hexameric ring structure that caps the 20S proteasome core. Strongly interacts with the prokaryotic ubiquitin-like protein Pup through a hydrophobic interface; the interacting region of ARC lies in its N-terminal coiled-coil domain. There is one Pup binding site per ARC hexamer ring. Upon ATP-binding, the C-terminus of ARC interacts with the alpha-rings of the proteasome core, possibly by binding to the intersubunit pockets.

The protein operates within protein degradation; proteasomal Pup-dependent pathway. Functionally, ATPase which is responsible for recognizing, binding, unfolding and translocation of pupylated proteins into the bacterial 20S proteasome core particle. May be essential for opening the gate of the 20S proteasome via an interaction with its C-terminus, thereby allowing substrate entry and access to the site of proteolysis. Thus, the C-termini of the proteasomal ATPase may function like a 'key in a lock' to induce gate opening and therefore regulate proteolysis. The polypeptide is Proteasome-associated ATPase (Stackebrandtia nassauensis (strain DSM 44728 / CIP 108903 / NRRL B-16338 / NBRC 102104 / LLR-40K-21)).